The chain runs to 286 residues: ATP synthase gamma chain (286 aa).

This sequence belongs to the ATPase gamma chain family. As to quaternary structure, F-type ATPases have 2 components, CF(1) - the catalytic core - and CF(0) - the membrane proton channel. CF(1) has five subunits: alpha(3), beta(3), gamma(1), delta(1), epsilon(1). CF(0) has three main subunits: a, b and c.

The protein resides in the cell membrane. In terms of biological role, produces ATP from ADP in the presence of a proton gradient across the membrane. The gamma chain is believed to be important in regulating ATPase activity and the flow of protons through the CF(0) complex. The protein is ATP synthase gamma chain of Oceanobacillus iheyensis (strain DSM 14371 / CIP 107618 / JCM 11309 / KCTC 3954 / HTE831).